We begin with the raw amino-acid sequence, 243 residues long: Ribosomal RNA small subunit methyltransferase J (243 aa).

S-adenosyl-L-methionine contacts are provided by residues 112–113 and Asp164; that span reads ER.

It belongs to the methyltransferase superfamily. RsmJ family.

The protein resides in the cytoplasm. It carries out the reaction guanosine(1516) in 16S rRNA + S-adenosyl-L-methionine = N(2)-methylguanosine(1516) in 16S rRNA + S-adenosyl-L-homocysteine + H(+). In terms of biological role, specifically methylates the guanosine in position 1516 of 16S rRNA. The sequence is that of Ribosomal RNA small subunit methyltransferase J from Legionella pneumophila subsp. pneumophila (strain Philadelphia 1 / ATCC 33152 / DSM 7513).